A 276-amino-acid polypeptide reads, in one-letter code: Putative pyruvate, phosphate dikinase regulatory protein (276 aa).

Residue 150–157 (GVSRTSKT) coordinates ADP.

This sequence belongs to the pyruvate, phosphate/water dikinase regulatory protein family. PDRP subfamily.

The catalysed reaction is N(tele)-phospho-L-histidyl/L-threonyl-[pyruvate, phosphate dikinase] + ADP = N(tele)-phospho-L-histidyl/O-phospho-L-threonyl-[pyruvate, phosphate dikinase] + AMP + H(+). It catalyses the reaction N(tele)-phospho-L-histidyl/O-phospho-L-threonyl-[pyruvate, phosphate dikinase] + phosphate + H(+) = N(tele)-phospho-L-histidyl/L-threonyl-[pyruvate, phosphate dikinase] + diphosphate. Functionally, bifunctional serine/threonine kinase and phosphorylase involved in the regulation of the pyruvate, phosphate dikinase (PPDK) by catalyzing its phosphorylation/dephosphorylation. The polypeptide is Putative pyruvate, phosphate dikinase regulatory protein (Lacticaseibacillus casei (strain BL23) (Lactobacillus casei)).